The sequence spans 397 residues: Phosphoglycerate kinase (397 aa).

Substrate contacts are provided by residues 21 to 23, R37, 60 to 63, R120, and R153; these read DFN and HLGR. ATP is bound by residues K206, G296, E327, and 353–356; that span reads GGDS.

Belongs to the phosphoglycerate kinase family. As to quaternary structure, monomer.

The protein resides in the cytoplasm. The enzyme catalyses (2R)-3-phosphoglycerate + ATP = (2R)-3-phospho-glyceroyl phosphate + ADP. It functions in the pathway carbohydrate degradation; glycolysis; pyruvate from D-glyceraldehyde 3-phosphate: step 2/5. The polypeptide is Phosphoglycerate kinase (Rhodopirellula baltica (strain DSM 10527 / NCIMB 13988 / SH1)).